The sequence spans 221 residues: 7-cyano-7-deazaguanine synthase (221 aa).

7-17 (LSGGLDSAVSL) serves as a coordination point for ATP. Positions 192, 200, 203, and 206 each coordinate Zn(2+).

It belongs to the QueC family. Homodimer. The cofactor is Zn(2+).

It carries out the reaction 7-carboxy-7-deazaguanine + NH4(+) + ATP = 7-cyano-7-deazaguanine + ADP + phosphate + H2O + H(+). The protein operates within purine metabolism; 7-cyano-7-deazaguanine biosynthesis. In terms of biological role, catalyzes the ATP-dependent conversion of 7-carboxy-7-deazaguanine (CDG) to 7-cyano-7-deazaguanine (preQ(0)). This Pelotomaculum thermopropionicum (strain DSM 13744 / JCM 10971 / SI) protein is 7-cyano-7-deazaguanine synthase.